The sequence spans 582 residues: Regulatory solute carrier protein family 1 member 1 (582 aa).

Disordered stretches follow at residues 1-32 (MSSL…ARSV), 56-76 (KASA…LQVL), 143-180 (EKSW…VPQD), 303-325 (VDMS…HGQP), 363-384 (VTCQ…SGRR), 390-409 (LTPS…SESG), 426-452 (ASTS…ESAR), and 483-529 (SEGA…LSTP). Positions 16-32 (SGQSPEVGSPTSLARSV) are enriched in polar residues. The segment covering 148 to 179 (PENQTPSPVNGLQQHRETGSVQREAGQQSVPQ) has biased composition (polar residues). The segment covering 390–408 (LTPSDQYSQGSCHQATSES) has biased composition (polar residues). 2 stretches are compositionally biased toward basic and acidic residues: residues 438-452 (SPDR…ESAR) and 490-503 (PSEH…DRPE). The UBA domain occupies 536 to 576 (IFPAADVDRILGAGFTLQEALGALHRVGGNADLALLVLLAK).

Interacts with YRDC. In terms of tissue distribution, expressed in epithelial and subepithelial cells of small intestine.

Its subcellular location is the cell membrane. The protein resides in the nucleus. It localises to the golgi apparatus. It is found in the trans-Golgi network. Its function is as follows. Mediates transcriptional and post-transcriptional regulation of SLC5A1. Inhibits a dynamin and PKC-dependent exocytotic pathway of SLC5A1. Also involved in transcriptional regulation of SLC22A2. Exhibits glucose-dependent, short-term inhibition of SLC5A1 and SLC22A2 by inhibiting the release of vesicles from the trans-Golgi network. Regulates the expression of SLC5A1 in a tissue-specific manner and is specifically involved in its regulation in the small intestine. This chain is Regulatory solute carrier protein family 1 member 1 (Rsc1a1), found in Mus musculus (Mouse).